We begin with the raw amino-acid sequence, 379 residues long: Cytochrome b (379 aa).

The next 4 membrane-spanning stretches (helical) occupy residues 33–53, 77–98, 113–133, and 178–198; these read FGSLLGACLTIQIITGLFLAM, WTIRYLHANGASVFFLCLFIHV, WNVGIILLFSVMATAFMGYVL, and FFALHFVLPFVILALVMIHLL. Heme b is bound by residues His-83 and His-97. Positions 182 and 196 each coordinate heme b. An a ubiquinone-binding site is contributed by His-201. 4 helical membrane passes run 226–246, 288–308, 320–340, and 347–367; these read TKDFLGLLLLILLLMVLTLFY, LGGVMALILSILILAIIPLLQ, LSQFLFWILVADLLTLTWIGG, and FITIGQVASILYFLLMVLIMP.

The protein belongs to the cytochrome b family. In terms of assembly, the cytochrome bc1 complex contains 11 subunits: 3 respiratory subunits (MT-CYB, CYC1 and UQCRFS1), 2 core proteins (UQCRC1 and UQCRC2) and 6 low-molecular weight proteins (UQCRH/QCR6, UQCRB/QCR7, UQCRQ/QCR8, UQCR10/QCR9, UQCR11/QCR10 and a cleavage product of UQCRFS1). This cytochrome bc1 complex then forms a dimer. Heme b is required as a cofactor.

It localises to the mitochondrion inner membrane. Its function is as follows. Component of the ubiquinol-cytochrome c reductase complex (complex III or cytochrome b-c1 complex) that is part of the mitochondrial respiratory chain. The b-c1 complex mediates electron transfer from ubiquinol to cytochrome c. Contributes to the generation of a proton gradient across the mitochondrial membrane that is then used for ATP synthesis. This chain is Cytochrome b (MT-CYB), found in Lepilemur edwardsi (Milne-Edwards's sportive lemur).